A 211-amino-acid polypeptide reads, in one-letter code: Beta-crystallin B3 (211 aa).

N-acetylmethionine is present on Met-1. Ala-2 carries the N-acetylalanine; in Beta-crystallin B3, N-terminally processed modification. An N-terminal arm region spans residues 2–23; the sequence is AEQHGAPEQAAAGKSHGGLGGS. Beta/gamma crystallin 'Greek key' domains lie at 24 to 63 and 64 to 108; these read YKVTVYELENFQGKRCELSAECPNLTDSLLEKVGSIQVES and GPWL…RPLH. The segment at 109–113 is connecting peptide; the sequence is IDGPD. 2 consecutive Beta/gamma crystallin 'Greek key' domains span residues 114 to 155 and 156 to 198; these read HKLH…RVIN and GTWV…RRIR. The interval 200–211 is C-terminal arm; it reads QKWHKRGCFLSS.

It belongs to the beta/gamma-crystallin family. In terms of assembly, homo/heterodimer, or complexes of higher-order. The structure of beta-crystallin oligomers seems to be stabilized through interactions between the N-terminal arms.

Crystallins are the dominant structural components of the vertebrate eye lens. The chain is Beta-crystallin B3 (Crybb3) from Mus musculus (Mouse).